Reading from the N-terminus, the 167-residue chain is Homeobox protein EgHBX3 (167 aa).

A DNA-binding region (homeobox) is located at residues 80-139 (SQSKRRVLFNKFQISQLEKRLKQRYLTAQERQELAHTIGLTPTQVKIWFQNHAYKMKRLF).

This sequence belongs to the NK-2 homeobox family.

The protein resides in the nucleus. The protein is Homeobox protein EgHBX3 (HBX3) of Echinococcus granulosus (Hydatid tapeworm).